Reading from the N-terminus, the 140-residue chain is MLMPKRTKYRRPHRVSFEGKSKGKNVIANGNHALVAKEGAFITNKQIEAARIAMTRYMKRTGKVWINIFPHLSLTKKPLEVRMGSGKGSPEEWVAVVKTGKVLFEVKDTTNSSKVEMEALRLASHKLPIKTKIVKKGAEV.

Belongs to the universal ribosomal protein uL16 family. Part of the 50S ribosomal subunit.

In terms of biological role, binds 23S rRNA and is also seen to make contacts with the A and possibly P site tRNAs. The chain is Large ribosomal subunit protein uL16 from Onion yellows phytoplasma (strain OY-M).